The primary structure comprises 328 residues: P2Y purinoceptor 3 (328 aa).

Residues 1-22 (MSMANFTAGRNSCTFQEEFKQV) are Extracellular-facing. N-linked (GlcNAc...) asparagine glycosylation is present at Asn5. The chain crosses the membrane as a helical span at residues 23–43 (LLPLVYSVVFLLGLPLNAVVI). The Cytoplasmic portion of the chain corresponds to 44-57 (GQIWLARKALTRTT). Residues 58–78 (IYMLNLATADLLYVCSLPLLI) traverse the membrane as a helical segment. Topologically, residues 79 to 96 (YNYTQKDYWPFGDFTCKF) are extracellular. A disulfide bridge links Cys94 with Cys172. The chain crosses the membrane as a helical span at residues 97-117 (VRFQFYTNLHGSILFLTCISV). Residues 118-139 (QRYMGICHPLASWHKKKGKKLT) lie on the Cytoplasmic side of the membrane. The helical transmembrane segment at 140-160 (WLVCAAVWFIVIAQCLPTFVF) threads the bilayer. Residues 161-189 (ASTGTQRNRTVCYDLSPPDRSASYFPYGI) are Extracellular-facing. The chain crosses the membrane as a helical span at residues 190–210 (TLTITGFLLPFAAILACYCSM). Residues 211 to 231 (ARILCQKDELIGLAVHKKKDK) lie on the Cytoplasmic side of the membrane. Residues 232 to 252 (AVRMIIIVVIVFSISFFPFHL) form a helical membrane-spanning segment. The Extracellular segment spans residues 253–275 (TKTIYLIVRSSPTLPCPTLQAFA). A helical transmembrane segment spans residues 276 to 298 (IAYKCTRPFASMNSVLDPILFYF). The Cytoplasmic segment spans residues 299-323 (TQRKFRESTRYLLDKMSSKWRHDHC).

It belongs to the G-protein coupled receptor 1 family.

Its subcellular location is the cell membrane. In terms of biological role, receptor for extracellular UDP &gt; ADP = UTP. The activity of this receptor is mediated by G proteins which activate a phosphatidylinositol-calcium second messenger system. In Meleagris gallopavo (Wild turkey), this protein is P2Y purinoceptor 3 (P2RY3).